The chain runs to 451 residues: Glucose-6-phosphate isomerase (451 aa).

Threonine 38 carries the post-translational modification Phosphothreonine. Residue glutamate 290 is the Proton donor of the active site. Catalysis depends on residues histidine 311 and lysine 425.

The protein belongs to the GPI family.

The protein resides in the cytoplasm. The enzyme catalyses alpha-D-glucose 6-phosphate = beta-D-fructose 6-phosphate. It functions in the pathway carbohydrate biosynthesis; gluconeogenesis. It participates in carbohydrate degradation; glycolysis; D-glyceraldehyde 3-phosphate and glycerone phosphate from D-glucose: step 2/4. Catalyzes the reversible isomerization of glucose-6-phosphate to fructose-6-phosphate. In Shouchella clausii (strain KSM-K16) (Alkalihalobacillus clausii), this protein is Glucose-6-phosphate isomerase.